We begin with the raw amino-acid sequence, 32 residues long: Islet amyloid polypeptide (32 aa).

This sequence belongs to the calcitonin family. Can form homodimers. Interacts with IDE and INS. Interaction with INS inhibits homodimerization and fibril formation.

Its subcellular location is the secreted. Its function is as follows. Amylin/IAPP is a glucoregulatory peptide hormone that plays an important role in the regulation of energy homeostasis. Selectively inhibits insulin-stimulated glucose utilization and glycogen deposition in muscle, while not affecting adipocyte glucose metabolism. IAPP function is mediated by the CALCR-RAMPs (AMYRs) receptor complexes. Amylin can also bind CALCR receptor in the absence of RAMPs, although it is more selective for AMYRs. This is Islet amyloid polypeptide (IAPP) from Saguinus oedipus (Cotton-top tamarin).